The chain runs to 502 residues: Probable cytosol aminopeptidase (502 aa).

Mn(2+) is bound by residues K267 and D272. The active site involves K279. D290, D349, and E351 together coordinate Mn(2+). Residue R353 is part of the active site.

The protein belongs to the peptidase M17 family. Mn(2+) is required as a cofactor.

It localises to the cytoplasm. The enzyme catalyses Release of an N-terminal amino acid, Xaa-|-Yaa-, in which Xaa is preferably Leu, but may be other amino acids including Pro although not Arg or Lys, and Yaa may be Pro. Amino acid amides and methyl esters are also readily hydrolyzed, but rates on arylamides are exceedingly low.. It catalyses the reaction Release of an N-terminal amino acid, preferentially leucine, but not glutamic or aspartic acids.. Functionally, presumably involved in the processing and regular turnover of intracellular proteins. Catalyzes the removal of unsubstituted N-terminal amino acids from various peptides. This is Probable cytosol aminopeptidase from Aeromonas hydrophila subsp. hydrophila (strain ATCC 7966 / DSM 30187 / BCRC 13018 / CCUG 14551 / JCM 1027 / KCTC 2358 / NCIMB 9240 / NCTC 8049).